A 362-amino-acid chain; its full sequence is Spermidine/putrescine import ATP-binding protein PotA (362 aa).

The ABC transporter domain occupies 6–236 (VELKHVGKRY…PVNHFVADFI (231 aa)). Position 38 to 45 (38 to 45 (GPSGSGKT)) interacts with ATP.

Belongs to the ABC transporter superfamily. Spermidine/putrescine importer (TC 3.A.1.11.1) family. The complex is composed of two ATP-binding proteins (PotA), two transmembrane proteins (PotB and PotC) and a solute-binding protein (PotD).

The protein resides in the cell membrane. The catalysed reaction is ATP + H2O + polyamine-[polyamine-binding protein]Side 1 = ADP + phosphate + polyamineSide 2 + [polyamine-binding protein]Side 1.. Functionally, part of the ABC transporter complex PotABCD involved in spermidine/putrescine import. Responsible for energy coupling to the transport system. This chain is Spermidine/putrescine import ATP-binding protein PotA, found in Lacticaseibacillus paracasei (strain ATCC 334 / BCRC 17002 / CCUG 31169 / CIP 107868 / KCTC 3260 / NRRL B-441) (Lactobacillus paracasei).